We begin with the raw amino-acid sequence, 490 residues long: MRLSISSTNVKEWSGDVLVVGLPKGDPSTTAVNLESRFPGVSSALNQQAFEGKTGQKLVLHPLANGNPQRLVLIGLGDADAIDLDGIRAAAAAAAQASIGCKGCLGLQLPWDSHHPDHAARISAEAVRLSLYADQRFQKEPEERRLPTALELIGLPASAAAGLEPVNATCAGVELARELVAAPPNYVTPAALAETAAALAHDYGMELTILERADCEARGMGAFLAVSQGSDLPPKFIHLIYRPEGAVKRRLALVGKGLTFDSGGYNLKVGGAQIDMMKFDMGGSASVLGAMRSIGELKPAGVEVHMVVASCENMVNGSAVHPGDIVTAANGTTIEINNTDAEGRLTLADALLYACEQKPDAVVDLATLTGACVVALGDEMAGYWSNNEALAEALDTAADAGGEGLWRMPLRQSYKKGLKSLLADMKNTGPRPGGSITAALFLKEFVSQDTAWAHIDIAGPVWSDKGKGVNPAGATGYGVRTLVNWVCAQA.

Residues Lys256 and Asp261 each coordinate Mn(2+). Lys268 is an active-site residue. Mn(2+)-binding residues include Asp280, Asp340, and Glu342. Residue Arg344 is part of the active site.

It belongs to the peptidase M17 family. Requires Mn(2+) as cofactor.

Its subcellular location is the cytoplasm. The enzyme catalyses Release of an N-terminal amino acid, Xaa-|-Yaa-, in which Xaa is preferably Leu, but may be other amino acids including Pro although not Arg or Lys, and Yaa may be Pro. Amino acid amides and methyl esters are also readily hydrolyzed, but rates on arylamides are exceedingly low.. It catalyses the reaction Release of an N-terminal amino acid, preferentially leucine, but not glutamic or aspartic acids.. In terms of biological role, presumably involved in the processing and regular turnover of intracellular proteins. Catalyzes the removal of unsubstituted N-terminal amino acids from various peptides. This Synechococcus sp. (strain CC9902) protein is Probable cytosol aminopeptidase.